The sequence spans 120 residues: NAD(P)H-quinone oxidoreductase subunit 3, chloroplastic (120 aa).

Helical transmembrane passes span 9–29 (IFWA…LISG), 64–84 (MFAL…PWAM), and 88–108 (VLGV…IIGS).

This sequence belongs to the complex I subunit 3 family. NDH is composed of at least 16 different subunits, 5 of which are encoded in the nucleus.

Its subcellular location is the plastid. The protein localises to the chloroplast thylakoid membrane. The enzyme catalyses a plastoquinone + NADH + (n+1) H(+)(in) = a plastoquinol + NAD(+) + n H(+)(out). The catalysed reaction is a plastoquinone + NADPH + (n+1) H(+)(in) = a plastoquinol + NADP(+) + n H(+)(out). In terms of biological role, NDH shuttles electrons from NAD(P)H:plastoquinone, via FMN and iron-sulfur (Fe-S) centers, to quinones in the photosynthetic chain and possibly in a chloroplast respiratory chain. The immediate electron acceptor for the enzyme in this species is believed to be plastoquinone. Couples the redox reaction to proton translocation, and thus conserves the redox energy in a proton gradient. This chain is NAD(P)H-quinone oxidoreductase subunit 3, chloroplastic, found in Drimys granadensis.